Here is a 104-residue protein sequence, read N- to C-terminus: Iron-sulfur cluster assembly protein CyaY (104 aa).

Belongs to the frataxin family.

In terms of biological role, involved in iron-sulfur (Fe-S) cluster assembly. May act as a regulator of Fe-S biogenesis. The chain is Iron-sulfur cluster assembly protein CyaY from Rickettsia prowazekii (strain Madrid E).